The primary structure comprises 1963 residues: Myosin-4 (1963 aa).

Residues 28-77 enclose the Myosin N-terminal SH3-like domain; the sequence is DSKKNVWIPDPEEGYLAGEITATKGDQVTIVTARGNEVTLKKELVQEMNP. One can recognise a Myosin motor domain in the interval 81-787; that stretch reads EKTEDMSNLS…VLAHLEDIRD (707 aa). Lysine 125 carries the N6,N6,N6-trimethyllysine modification. 174–181 serves as a coordination point for ATP; it reads GESGAGKT. Actin-binding regions lie at residues 662 to 684 and 766 to 780; these read LNNL…IPNE and RIGL…GVLA. Residues 848–1161 form an alpha-helical tailpiece (S2) region; that stretch reads MLKAGKEAEE…LEELGEKLDE (314 aa). A coiled-coil region spans residues 848–1963; the sequence is MLKAGKEAEE…SPSRARASDF (1116 aa). Composition is skewed to basic and acidic residues over residues 970-988 and 1133-1146; these read LRKA…RSLQ and NERQ…RAKS. Disordered regions lie at residues 970–990 and 1125–1146; these read LRKA…LQDE and SELE…RAKS. The segment at 1162–1173 is hinge; sequence QGGATAAQVEVN. The segment at 1162 to 1963 is light meromyosin (LMM); the sequence is QGGATAAQVE…SPSRARASDF (802 aa). Disordered regions lie at residues 1317-1336 and 1912-1963; these read LTSQ…RERQ and LEDA…ASDF. The span at 1322-1336 shows a compositional bias: basic and acidic residues; that stretch reads EEARRTADEEARERQ.

Belongs to the TRAFAC class myosin-kinesin ATPase superfamily. Myosin family. As to quaternary structure, muscle myosin is a hexameric protein that consists of 2 heavy chain subunits (MHC), 2 alkali light chain subunits (MLC) and 2 regulatory light chain subunits (MLC-2). Forms a complex composed of chaperone unc-45, unc-54 and ubiquitin-protein ligase ufd-2; promotes poly-ubiquitination of unfolded unc-54. Within the complex interacts with unc-45 (via UCS domain) and ufd-2. Interacts with itr-1 (via c-terminal coiled coil domain). Post-translationally, unfolded unc-54 is poly-ubiquitinated by ufd-2.

Its subcellular location is the cytoplasm. It localises to the myofibril. Functionally, required for muscle contraction. This Caenorhabditis elegans protein is Myosin-4 (unc-54).